A 466-amino-acid polypeptide reads, in one-letter code: Chromosomal replication initiator protein DnaA (466 aa).

The tract at residues 1 to 85 (MSLSLWQHCL…FEVGNKPVSA (85 aa)) is domain I, interacts with DnaA modulators. Residues 82-122 (PVSARTTESVPKTVTHPAVNSTPTNSQPVRPSWDNQPQSQL) form a disordered region. The span at 85-122 (ARTTESVPKTVTHPAVNSTPTNSQPVRPSWDNQPQSQL) shows a compositional bias: polar residues. The segment at 85-129 (ARTTESVPKTVTHPAVNSTPTNSQPVRPSWDNQPQSQLPELNYRS) is domain II. The tract at residues 130 to 346 (NVNPKHKFDN…GALNRVIANA (217 aa)) is domain III, AAA+ region. The ATP site is built by glycine 174, glycine 176, lysine 177, and threonine 178. The interval 347-466 (NFTGRAITID…FSNLIRTLSS (120 aa)) is domain IV, binds dsDNA.

The protein belongs to the DnaA family. As to quaternary structure, oligomerizes as a right-handed, spiral filament on DNA at oriC.

Its subcellular location is the cytoplasm. Functionally, plays an essential role in the initiation and regulation of chromosomal replication. ATP-DnaA binds to the origin of replication (oriC) to initiate formation of the DNA replication initiation complex once per cell cycle. Binds the DnaA box (a 9 base pair repeat at the origin) and separates the double-stranded (ds)DNA. Forms a right-handed helical filament on oriC DNA; dsDNA binds to the exterior of the filament while single-stranded (ss)DNA is stabiized in the filament's interior. The ATP-DnaA-oriC complex binds and stabilizes one strand of the AT-rich DNA unwinding element (DUE), permitting loading of DNA polymerase. After initiation quickly degrades to an ADP-DnaA complex that is not apt for DNA replication. Binds acidic phospholipids. The protein is Chromosomal replication initiator protein DnaA of Proteus mirabilis (strain HI4320).